A 475-amino-acid polypeptide reads, in one-letter code: Ribulose bisphosphate carboxylase large chain (475 aa).

The propeptide occupies 1-2 (MS). Pro3 is subject to N-acetylproline. Lys14 carries the N6,N6,N6-trimethyllysine modification. The substrate site is built by Asn123 and Thr173. Lys175 serves as the catalytic Proton acceptor. Lys177 contributes to the substrate binding site. Mg(2+)-binding residues include Lys201, Asp203, and Glu204. N6-carboxylysine is present on Lys201. The Proton acceptor role is filled by His294. Substrate contacts are provided by Arg295, His327, and Ser379.

The protein belongs to the RuBisCO large chain family. Type I subfamily. Heterohexadecamer of 8 large chains and 8 small chains; disulfide-linked. The disulfide link is formed within the large subunit homodimers. It depends on Mg(2+) as a cofactor. The disulfide bond which can form in the large chain dimeric partners within the hexadecamer appears to be associated with oxidative stress and protein turnover.

Its subcellular location is the plastid. It is found in the chloroplast. The catalysed reaction is 2 (2R)-3-phosphoglycerate + 2 H(+) = D-ribulose 1,5-bisphosphate + CO2 + H2O. It carries out the reaction D-ribulose 1,5-bisphosphate + O2 = 2-phosphoglycolate + (2R)-3-phosphoglycerate + 2 H(+). In terms of biological role, ruBisCO catalyzes two reactions: the carboxylation of D-ribulose 1,5-bisphosphate, the primary event in carbon dioxide fixation, as well as the oxidative fragmentation of the pentose substrate in the photorespiration process. Both reactions occur simultaneously and in competition at the same active site. This is Ribulose bisphosphate carboxylase large chain from Afrocarpus gracilior (African fern pine).